The primary structure comprises 270 residues: Fructose-2,6-bisphosphatase TIGAR (270 aa).

His-11 functions as the Tele-phosphohistidine intermediate in the catalytic mechanism. The residue at position 50 (Lys-50) is an N6-acetyllysine. The Proton donor/acceptor role is filled by Glu-89.

Belongs to the phosphoglycerate mutase family. Interacts with HK2; the interaction increases hexokinase HK2 activity in a hypoxia- and HIF1A-dependent manner, resulting in the regulation of mitochondrial membrane potential, thus increasing NADPH production and decreasing intracellular ROS levels.

It localises to the cytoplasm. The protein localises to the nucleus. The protein resides in the mitochondrion. The enzyme catalyses beta-D-fructose 2,6-bisphosphate + H2O = beta-D-fructose 6-phosphate + phosphate. In terms of biological role, fructose-bisphosphatase hydrolyzing fructose-2,6-bisphosphate as well as fructose-1,6-bisphosphate. Acts as a negative regulator of glycolysis by lowering intracellular levels of fructose-2,6-bisphosphate in a p53/TP53-dependent manner, resulting in the pentose phosphate pathway (PPP) activation and NADPH production. Contributes to the generation of reduced glutathione to cause a decrease in intracellular reactive oxygen species (ROS) content, correlating with its ability to protect cells from oxidative or metabolic stress-induced cell death. Plays a role in promoting protection against cell death during hypoxia by decreasing mitochondria ROS levels in a HK2-dependent manner through a mechanism that is independent of its fructose-bisphosphatase activity. In response to cardiac damage stress, mediates p53-induced inhibition of myocyte mitophagy through ROS levels reduction and the subsequent inactivation of BNIP3. Reduced mitophagy results in an enhanced apoptotic myocyte cell death, and exacerbates cardiac damage. Plays a role in adult intestinal regeneration; contributes to the growth, proliferation and survival of intestinal crypts following tissue ablation. Plays a neuroprotective role against ischemic brain damage by enhancing PPP flux and preserving mitochondria functions. Protects glioma cells from hypoxia- and ROS-induced cell death by inhibiting glycolysis and activating mitochondrial energy metabolism and oxygen consumption in a TKTL1-dependent and p53/TP53-independent manner. Plays a role in cancer cell survival by promoting DNA repair through activating PPP flux in a CDK5-ATM-dependent signaling pathway during hypoxia and/or genome stress-induced DNA damage responses. Involved in intestinal tumor progression. This is Fructose-2,6-bisphosphatase TIGAR from Bos taurus (Bovine).